A 468-amino-acid polypeptide reads, in one-letter code: Glutamate--tRNA ligase (468 aa).

The 'HIGH' region motif lies at 8 to 18; it reads PSPTGFLHVGG. Residues cysteine 97, cysteine 99, cysteine 124, and aspartate 126 each contribute to the Zn(2+) site. Positions 236–240 match the 'KMSKS' region motif; that stretch reads KLSKR. An ATP-binding site is contributed by lysine 239.

Belongs to the class-I aminoacyl-tRNA synthetase family. Glutamate--tRNA ligase type 1 subfamily. Monomer. The cofactor is Zn(2+).

The protein localises to the cytoplasm. The catalysed reaction is tRNA(Glu) + L-glutamate + ATP = L-glutamyl-tRNA(Glu) + AMP + diphosphate. Functionally, catalyzes the attachment of glutamate to tRNA(Glu) in a two-step reaction: glutamate is first activated by ATP to form Glu-AMP and then transferred to the acceptor end of tRNA(Glu). The sequence is that of Glutamate--tRNA ligase from Francisella tularensis subsp. holarctica (strain FTNF002-00 / FTA).